A 250-amino-acid polypeptide reads, in one-letter code: 3-deoxy-manno-octulosonate cytidylyltransferase (250 aa).

Belongs to the KdsB family.

It localises to the cytoplasm. The enzyme catalyses 3-deoxy-alpha-D-manno-oct-2-ulosonate + CTP = CMP-3-deoxy-beta-D-manno-octulosonate + diphosphate. Its pathway is nucleotide-sugar biosynthesis; CMP-3-deoxy-D-manno-octulosonate biosynthesis; CMP-3-deoxy-D-manno-octulosonate from 3-deoxy-D-manno-octulosonate and CTP: step 1/1. The protein operates within bacterial outer membrane biogenesis; lipopolysaccharide biosynthesis. Functionally, activates KDO (a required 8-carbon sugar) for incorporation into bacterial lipopolysaccharide in Gram-negative bacteria. The polypeptide is 3-deoxy-manno-octulosonate cytidylyltransferase (Francisella tularensis subsp. novicida (strain U112)).